The chain runs to 337 residues: Lipopolysaccharide 1,3-galactosyltransferase (337 aa).

UDP-binding positions include 33–38 and 130–131; these read GIDKNF and DA. Mg(2+)-binding residues include Asp130 and Asp132. 2 short sequence motifs (DXD) span residues 130 to 132 and 219 to 221; these read DAD and DQD. A Mg(2+)-binding site is contributed by His264. 264–270 lines the UDP pocket; sequence HYIGPTK.

It belongs to the glycosyltransferase 8 family. The cofactor is Mg(2+).

It catalyses the reaction UDP-alpha-D-galactose + [lipopolysaccharide] = UDP + 3-alpha-D-galactosyl-[lipopolysaccharide].. It participates in bacterial outer membrane biogenesis; LPS core biosynthesis. With respect to regulation, inhibited in a competitive manner by closely related nonsubstrate lipopolysaccharides. Functionally, galactosyltransferase involved in the biosynthesis of the core oligosaccharide region of lipopolysaccharide (LPS). Catalyzes the addition of an alpha l,3-linked galactose (galactose I) to the first outer-core glucose (glucose I). Cannot use UDP-glucose. Activity probably does not require the branched galactose added by WaaB, but it is higher in the presence of this branched galactose. This is Lipopolysaccharide 1,3-galactosyltransferase from Salmonella typhimurium (strain LT2 / SGSC1412 / ATCC 700720).